Consider the following 331-residue polypeptide: Serine racemase (331 aa).

ATP is bound by residues S34 and K54. The active-site Proton acceptor is the K59. K59 is modified (N6-(pyridoxal phosphate)lysine). T81 lines the Ca(2+) pocket. The Proton acceptor role is filled by S84. N86 provides a ligand contact to pyridoxal 5'-phosphate. ATP is bound at residue Y121. D178 contributes to the Mg(2+) binding site. Residues G186, G187, and G188 each contribute to the pyridoxal 5'-phosphate site. Positions 210, 214, and 216 each coordinate Ca(2+). The Mg(2+) site is built by E210, A214, and D216. Positions 210, 214, and 216 each coordinate Mn(2+). ATP is bound at residue K278. Residue S314 participates in pyridoxal 5'-phosphate binding. Residue N317 coordinates ATP.

It belongs to the serine/threonine dehydratase family. Homodimer. Mg(2+) is required as a cofactor. Mn(2+) serves as cofactor. It depends on Ca(2+) as a cofactor. Requires pyridoxal 5'-phosphate as cofactor. Expressed in the whole plant.

The catalysed reaction is L-serine = D-serine. The enzyme catalyses L-serine = pyruvate + NH4(+). It catalyses the reaction D-serine = pyruvate + NH4(+). Its activity is regulated as follows. Inhibited by hydroxylamine. Racemase activity is enhanced by Ca(2+), Mg(2+), Mn(2+), and is decreased by Ni(2+), Zn(2+). Hydratase activity is enhanced by Ca(2+), Mg(2+), Mn(2+), Cu(2+), Fe(2+), Ni(2+). Functionally, catalyzes the synthesis of D-serine from L-serine. Has dehydratase activity towards both L-serine and D-serine. Displays high substrate specificity for L-serine, whereas L-alanine, L-arginine, and L-glutamine were poor substrates. The chain is Serine racemase (SR) from Arabidopsis thaliana (Mouse-ear cress).